We begin with the raw amino-acid sequence, 396 residues long: Pectinesterase (396 aa).

The first 26 residues, 1 to 26 (MQSTTLYLKTAAFLGGCSLFAATALA), serve as a signal peptide directing secretion. T174 serves as a coordination point for substrate. D232 functions as the Proton donor in the catalytic mechanism. The active-site Nucleophile is D259. Residues R324 and W326 each coordinate substrate.

This sequence belongs to the pectinesterase family.

The protein resides in the secreted. The catalysed reaction is [(1-&gt;4)-alpha-D-galacturonosyl methyl ester](n) + n H2O = [(1-&gt;4)-alpha-D-galacturonosyl](n) + n methanol + n H(+). It participates in glycan metabolism; pectin degradation; 2-dehydro-3-deoxy-D-gluconate from pectin: step 1/5. Its function is as follows. Involved in maceration and soft-rotting of plant tissue. The sequence is that of Pectinesterase (pme) from Ralstonia solanacearum (Pseudomonas solanacearum).